A 325-amino-acid polypeptide reads, in one-letter code: Glutarate 2-hydroxylase (325 aa).

Fe cation is bound by residues histidine 160, aspartate 162, and histidine 292.

This sequence belongs to the glutarate hydroxylase family. As to quaternary structure, homotetramer. It depends on Fe(2+) as a cofactor.

It catalyses the reaction glutarate + 2-oxoglutarate + O2 = (S)-2-hydroxyglutarate + succinate + CO2. The protein operates within amino-acid degradation. Acts as an alpha-ketoglutarate-dependent dioxygenase catalyzing hydroxylation of glutarate (GA) to L-2-hydroxyglutarate (L2HG). Functions in a L-lysine degradation pathway that proceeds via cadaverine, glutarate and L-2-hydroxyglutarate. The chain is Glutarate 2-hydroxylase from Escherichia coli (strain K12 / MC4100 / BW2952).